The chain runs to 122 residues: Flagellar protein FliT (122 aa).

Residues 1-50 are required for homodimerization; that stretch reads MERQQQLLAAYQQIHSLSSQMIALAQTERWEDLVELELAYVTAVESTAAF. Positions 60–98 are fliD binding; it reads LQELLRNKLQQILDNETELKRLLQQRMDQLKELIGQSTR.

It belongs to the FliT family. In terms of assembly, homodimer. Interacts with FliD and FlhC.

It localises to the cytoplasm. The protein localises to the cytosol. In terms of biological role, dual-function protein that regulates the transcription of class 2 flagellar operons and that also acts as an export chaperone for the filament-capping protein FliD. As a transcriptional regulator, acts as an anti-FlhDC factor; it directly binds FlhC, thus inhibiting the binding of the FlhC/FlhD complex to class 2 promoters, resulting in decreased expression of class 2 flagellar operons. As a chaperone, effects FliD transition to the membrane by preventing its premature polymerization, and by directing it to the export apparatus. This is Flagellar protein FliT from Serratia proteamaculans (strain 568).